The sequence spans 335 residues: tRNA pseudouridine synthase D (335 aa).

Residue Asp-77 is the Nucleophile of the active site. The TRUD domain occupies 152-308 (GFPNYFTEQR…AQNLNWQFEP (157 aa)).

Belongs to the pseudouridine synthase TruD family.

It catalyses the reaction uridine(13) in tRNA = pseudouridine(13) in tRNA. In terms of biological role, responsible for synthesis of pseudouridine from uracil-13 in transfer RNAs. The chain is tRNA pseudouridine synthase D from Actinobacillus succinogenes (strain ATCC 55618 / DSM 22257 / CCUG 43843 / 130Z).